The primary structure comprises 199 residues: Recombination protein RecR (199 aa).

Residues 58-73 (CVNCGNIGTGDLCEIC) form a C4-type zinc finger. A Toprim domain is found at 81–176 (GEICVVEDVA…TLSSLAQGVP (96 aa)).

This sequence belongs to the RecR family.

Its function is as follows. May play a role in DNA repair. It seems to be involved in an RecBC-independent recombinational process of DNA repair. It may act with RecF and RecO. The chain is Recombination protein RecR from Jannaschia sp. (strain CCS1).